The sequence spans 327 residues: Biotin synthase (327 aa).

Positions 49-275 (RFGREVSLCS…VNPHAEVRMA (227 aa)) constitute a Radical SAM core domain. The [4Fe-4S] cluster site is built by C67, C71, and C74. Residues S112, C143, C203, and R273 each contribute to the [2Fe-2S] cluster site.

The protein belongs to the radical SAM superfamily. Biotin synthase family. As to quaternary structure, homodimer. It depends on [4Fe-4S] cluster as a cofactor. [2Fe-2S] cluster serves as cofactor.

The catalysed reaction is (4R,5S)-dethiobiotin + (sulfur carrier)-SH + 2 reduced [2Fe-2S]-[ferredoxin] + 2 S-adenosyl-L-methionine = (sulfur carrier)-H + biotin + 2 5'-deoxyadenosine + 2 L-methionine + 2 oxidized [2Fe-2S]-[ferredoxin]. The protein operates within cofactor biosynthesis; biotin biosynthesis; biotin from 7,8-diaminononanoate: step 2/2. Its function is as follows. Catalyzes the conversion of dethiobiotin (DTB) to biotin by the insertion of a sulfur atom into dethiobiotin via a radical-based mechanism. The sequence is that of Biotin synthase from Maridesulfovibrio salexigens (strain ATCC 14822 / DSM 2638 / NCIMB 8403 / VKM B-1763) (Desulfovibrio salexigens).